The primary structure comprises 542 residues: CTP synthase (542 aa).

The tract at residues 1-265 (MTRYVFITGG…DREVLALFGI (265 aa)) is amidoligase domain. Serine 13 contacts CTP. A UTP-binding site is contributed by serine 13. Residues 14–19 (SLGKGL) and aspartate 71 contribute to the ATP site. Mg(2+) contacts are provided by aspartate 71 and glutamate 139. Residues 146-148 (DIE), 186-191 (KTKPTQ), and lysine 222 each bind CTP. UTP-binding positions include 186–191 (KTKPTQ) and lysine 222. An ATP-binding site is contributed by 238–240 (RDV). In terms of domain architecture, Glutamine amidotransferase type-1 spans 291–541 (SIAIVGKYTG…IGAAVVQSRL (251 aa)). Residue glycine 353 participates in L-glutamine binding. Cysteine 380 functions as the Nucleophile; for glutamine hydrolysis in the catalytic mechanism. L-glutamine contacts are provided by residues 381 to 384 (FGMQ), glutamate 404, and arginine 469. Active-site residues include histidine 514 and glutamate 516.

Belongs to the CTP synthase family. As to quaternary structure, homotetramer.

The enzyme catalyses UTP + L-glutamine + ATP + H2O = CTP + L-glutamate + ADP + phosphate + 2 H(+). The catalysed reaction is L-glutamine + H2O = L-glutamate + NH4(+). It carries out the reaction UTP + NH4(+) + ATP = CTP + ADP + phosphate + 2 H(+). It functions in the pathway pyrimidine metabolism; CTP biosynthesis via de novo pathway; CTP from UDP: step 2/2. Its activity is regulated as follows. Allosterically activated by GTP, when glutamine is the substrate; GTP has no effect on the reaction when ammonia is the substrate. The allosteric effector GTP functions by stabilizing the protein conformation that binds the tetrahedral intermediate(s) formed during glutamine hydrolysis. Inhibited by the product CTP, via allosteric rather than competitive inhibition. Its function is as follows. Catalyzes the ATP-dependent amination of UTP to CTP with either L-glutamine or ammonia as the source of nitrogen. Regulates intracellular CTP levels through interactions with the four ribonucleotide triphosphates. This Methylobacterium nodulans (strain LMG 21967 / CNCM I-2342 / ORS 2060) protein is CTP synthase.